The chain runs to 2892 residues: E3 ubiquitin-protein ligase lubel (2892 aa).

Disordered regions lie at residues 23 to 55 (DRIGPKPPPTPPNGVAGGLPKAPALPPKAKSTP), 125 to 252 (KQHM…QLEK), 395 to 423 (SQQHPGWAQHPHQALPQHQHPDQWSQFGS), 483 to 631 (PSAA…ESEG), 644 to 672 (QKLQEADQHKSSKKAEPKRKPEMKDENTQ), 685 to 737 (AHEE…PDHE), 757 to 865 (CCKT…DNSL), and 949 to 975 (DRFTTPEPNKMERRPHYRSNSQLQQES). Positions 40–52 (GLPKAPALPPKAK) are enriched in low complexity. The segment covering 189–198 (GWRGSLGGGA) has biased composition (gly residues). Residues 206-215 (ATSSANQMNN) are compositionally biased toward polar residues. Composition is skewed to low complexity over residues 402–412 (AQHPHQALPQH) and 483–503 (PSAASRAASRSRYAASPTPSR). Over residues 516–528 (VDDELTDDEDSDQ) the composition is skewed to acidic residues. Polar residues predominate over residues 535 to 546 (VSNRSGMTSASR). Residues 547-560 (SQHHQNHIQPRQRR) show a composition bias toward basic residues. Residues 606–623 (GTLTRNKTATDSARTSRI) show a composition bias toward polar residues. Over residues 647–670 (QEADQHKSSKKAEPKRKPEMKDEN) the composition is skewed to basic and acidic residues. The span at 801 to 813 (KPTTKSQQPSQKS) shows a compositional bias: polar residues. Low complexity-rich tracts occupy residues 818–837 (SKTTHTNSTSSSKASPAVNS) and 846–856 (KTPSKSTLKTS). Residues 1042–1187 (MHIILKELEL…LMRIWGSPNG (146 aa)) enclose the UBA-like 1 domain. Disordered regions lie at residues 1214–1252 (LQPPLAGQSPSPAQANPFDQPRTDESPVKSTYATPSPYQ), 1477–1520 (LPTA…KLET), 1557–1653 (AEVQ…KILS), 1717–2019 (STTI…NLSE), 2032–2082 (RDEI…EGNT), 2191–2316 (SAPP…PLRS), and 2411–2431 (DYETSATEEEQEEPNLAEPQK). Over residues 1241 to 1252 (VKSTYATPSPYQ) the composition is skewed to polar residues. Basic and acidic residues predominate over residues 1510–1519 (EELRQQEKLE). Polar residues predominate over residues 1560-1571 (QVQSDDQPSTSR). A compositionally biased stretch (basic residues) spans 1576-1587 (RAKRSQQSRKGR). The segment covering 1595–1607 (PTNRTKLPNNIDQ) has biased composition (polar residues). Basic and acidic residues predominate over residues 1608–1627 (KVNESKTAAKETEAVKDKDL). Composition is skewed to polar residues over residues 1630-1653 (AASNIQSDVTASDPKTSTPLKILS), 1717-1726 (STTISEQSEG), and 1764-1779 (KSPTSQEVNIQDTSHI). Residues 1822–1834 (LSSSSLRSESRSS) are compositionally biased toward low complexity. Over residues 1859–1881 (TVSSPKSEQLSDNQEVNLVSQET) the composition is skewed to polar residues. A compositionally biased stretch (acidic residues) spans 1918 to 1927 (DSDEVFEDAP). Basic and acidic residues predominate over residues 1953–1963 (DGQRAETKSPE). 2 stretches are compositionally biased toward acidic residues: residues 1964–1975 (DEVVILLDEESQ) and 2036–2079 (SMDE…DGEE). 2 stretches are compositionally biased toward low complexity: residues 2214 to 2230 (PSEVEPTPVEEPTALPI) and 2269 to 2291 (SGTASKGPSTSSSTKTNKSTVSK). Residues 2297 to 2308 (NEPTNKSNSTPL) show a composition bias toward polar residues. The span at 2411 to 2425 (DYETSATEEEQEEPN) shows a compositional bias: acidic residues. The 57-residue stretch at 2457-2513 (DPAILARKYVDQELVTNIAEAQIAATLVSMKFSEDVALWAARECSDLDQAIAMLQQE) folds into the UBA-like 2 domain. Positions 2510–2748 (LQQECELCMN…LGLHAHHPRN (239 aa)) are TRIAD supradomain. Zn(2+)-binding residues include cysteine 2514, cysteine 2517, cysteine 2537, cysteine 2540, cysteine 2618, cysteine 2621, cysteine 2636, cysteine 2639, cysteine 2644, cysteine 2647, histidine 2655, cysteine 2660, cysteine 2690, and cysteine 2693. The RING-type 1 zinc finger occupies 2514 to 2564 (CELCMNSYPMNQMVSMLKCLHKCCKQCAKSYFTVQITDRSINDCSCPFCKL). The necessary for linear polyubiquitination and sufficent for inducing DptA in the intestine stretch occupies residues 2514–2892 (CELCMNSYPM…IKKHIPLKSA (379 aa)). An IBR-type zinc finger spans residues 2601–2660 (QRKLRDRSLLQDPNFKWCIQCSSGFFARPKQKRLICPDCGSVTCAQCRKPWERQHEGSSC). The RING-type 2; atypical zinc finger occupies 2690–2720 (CPKCKFRYSLARGGCMHFTCTQCKFEFCYGC). The active site involves cysteine 2704. 2 residues coordinate Zn(2+): cysteine 2709 and cysteine 2712.

This sequence belongs to the RBR family.

The enzyme catalyses [E2 ubiquitin-conjugating enzyme]-S-ubiquitinyl-L-cysteine + [acceptor protein]-L-lysine = [E2 ubiquitin-conjugating enzyme]-L-cysteine + [acceptor protein]-N(6)-ubiquitinyl-L-lysine.. E3 ubiquitin-protein ligase which conjugates linear 'Met-1'- and 'Lys-63'-linked polyubiquitin chains to substrates and plays a crucial role in the NF-kappa-B intestinal inflammatory response to oral infection and in the heat stress response. Preferentially interacts with 'Lys-63'-linked, and to a lesser extent 'Lys-48'-linked, polyubiquitin chains. Upon oral infection with a Gram-negative bacterium E.carotovora subsp. carotovora 15, functions with the E2 ubiquitin-conjugating enzyme Ubc10 to mediate the conjugation of 'Lys-63'- and linear 'Met-1'-linked polyubiquitin chains to the substrate key which is essential for activation of the NF-kappa-B signaling cascade in the adult intestinal epithelium. It is not required for systemic immune response to septic infection with either E.carotovora subsp. carotovora 15 or Gram-positive M.luteus bacteria. Function in controlling linear ubiquitination is also essential for regulating the heat stress response in adults. This function may require the E2 ubiquitin-conjugating enzymes Ubc10 or eff. This Drosophila melanogaster (Fruit fly) protein is E3 ubiquitin-protein ligase lubel.